Reading from the N-terminus, the 335-residue chain is Probable cytosolic iron-sulfur protein assembly protein Ciao1 (335 aa).

WD repeat units lie at residues 12–51 (GHKG…WSTK), 57–96 (GHKR…FECN), 101–140 (GHEN…EFEC), 146–185 (AHTQ…SDWD), 192–231 (SHTS…NDAG), 250–289 (QHSR…KRDE), and 301–335 (AHEQ…KVDD).

It belongs to the WD repeat CIA1 family.

Essential component of the cytosolic iron-sulfur (Fe/S) protein assembly machinery. Required for the maturation of extramitochondrial Fe/S proteins. In Drosophila pseudoobscura pseudoobscura (Fruit fly), this protein is Probable cytosolic iron-sulfur protein assembly protein Ciao1.